We begin with the raw amino-acid sequence, 212 residues long: Golgi SNAP receptor complex member 2 (212 aa).

At Met1 the chain carries N-acetylmethionine. The Cytoplasmic portion of the chain corresponds to 1–190 (MDPLFQQTHK…LIEKRAFQDK (190 aa)). A coiled-coil region spans residues 61–107 (NKRQNARLRVDQLKYDVQHLQTALRNFQHRRHAREQQERQREELLSR). The IxM motif; signal for cargo packaging into COPII-coated vesicles motif lies at 118 to 120 (IPM). A helical; Anchor for type IV membrane protein transmembrane segment spans residues 191–211 (YFMIGGMLLTCVVMFLVVQYL). Residue Thr212 is a topological domain, vesicular.

The protein belongs to the GOSR2 family. As to quaternary structure, part of a unique SNARE complex composed of the Golgi SNAREs GOSR1, STX5 and YKT6. Interacts (via IxM motif) with SEC24C and SEC24D; mediates GOSR2 packaging into COPII-coated vesicles. Interacts with BET1.

The protein resides in the golgi apparatus. Its subcellular location is the cis-Golgi network membrane. It is found in the golgi apparatus membrane. It localises to the endoplasmic reticulum membrane. Its function is as follows. Involved in transport of proteins from the cis/medial-Golgi to the trans-Golgi network. The chain is Golgi SNAP receptor complex member 2 (GOSR2) from Homo sapiens (Human).